Consider the following 93-residue polypeptide: MTKSELIENLVSLNPALQVKSVEDGVKEILEQIMLFLERGERVEVRGFGSFSLHYRQPRVGRNPKTGESVKLDAKYVPHFKAGKDLKERVDLV.

Belongs to the bacterial histone-like protein family. As to quaternary structure, heterodimer of an alpha and a beta chain.

Its function is as follows. This protein is one of the two subunits of integration host factor, a specific DNA-binding protein that functions in genetic recombination as well as in transcriptional and translational control. This is Integration host factor subunit beta from Actinobacillus pleuropneumoniae serotype 7 (strain AP76).